Consider the following 68-residue polypeptide: Head completion protein (68 aa).

Belongs to the lambda phage gpW family. In terms of assembly, monomer in solution, assembles into hexamers on the prohead. May bind FII and portal protein (Potential).

Its subcellular location is the virion. Plays a role in morphogenesis of the virion head after genome packaging. Presumably interacts with the portal vertex to stabilize the packaged DNA within the head after packaging. Probably binds to the head-tail connector protein FII. In Escherichia coli (Bacteriophage lambda), this protein is Head completion protein (W).